The following is a 144-amino-acid chain: MWLQNLLFLGIVVYSFSAPTRSPNPVTRPWKHVDAIKEALSLLNDMRALENEKNEDVDIISNEFSIQRPTCVQTRLKLYKQGLRGNLTKLNGALTMIASHYQTNCPPTPETDCEIEVTTFEDFIKNLKGFLFDIPFDCWKPVQK.

Residues 1–17 form the signal peptide; that stretch reads MWLQNLLFLGIVVYSFS. O-linked (GalNAc...) serine glycosylation occurs at serine 22. Threonine 27 carries O-linked (GalNAc...) threonine glycosylation. 2 disulfides stabilise this stretch: cysteine 71/cysteine 113 and cysteine 105/cysteine 138. A glycan (N-linked (GlcNAc...) asparagine) is linked at asparagine 86.

The protein belongs to the GM-CSF family. As to quaternary structure, monomer. The signaling GM-CSF receptor complex is a dodecamer of two head-to-head hexamers of two alpha, two beta, and two ligand subunits.

It localises to the secreted. Functionally, cytokine that stimulates the growth and differentiation of hematopoietic precursor cells from various lineages, including granulocytes, macrophages, eosinophils and erythrocytes. This is Granulocyte-macrophage colony-stimulating factor (Csf2) from Rattus norvegicus (Rat).